Here is a 492-residue protein sequence, read N- to C-terminus: GTPase Obg (492 aa).

The 158-residue stretch at Pro2–Val159 folds into the Obg domain. Positions Ala160–Ser340 constitute an OBG-type G domain. GTP contacts are provided by residues Gly166–Ser173, Phe191–Val195, Asp212–Gly215, Asn292–Asp295, and Ser321–Val323. 2 residues coordinate Mg(2+): Ser173 and Thr193. Residues Pro358 to Pro438 enclose the OCT domain. A disordered region spans residues Pro441–Thr492. Basic and acidic residues-rich tracts occupy residues Thr453 to Lys469 and Arg476 to Thr492.

It belongs to the TRAFAC class OBG-HflX-like GTPase superfamily. OBG GTPase family. As to quaternary structure, monomer. It depends on Mg(2+) as a cofactor.

The protein resides in the cytoplasm. Functionally, an essential GTPase which binds GTP, GDP and possibly (p)ppGpp with moderate affinity, with high nucleotide exchange rates and a fairly low GTP hydrolysis rate. Plays a role in control of the cell cycle, stress response, ribosome biogenesis and in those bacteria that undergo differentiation, in morphogenesis control. The protein is GTPase Obg of Mycolicibacterium paratuberculosis (strain ATCC BAA-968 / K-10) (Mycobacterium paratuberculosis).